A 391-amino-acid polypeptide reads, in one-letter code: Tryptophan synthase beta chain (391 aa).

N6-(pyridoxal phosphate)lysine is present on K84.

It belongs to the TrpB family. As to quaternary structure, tetramer of two alpha and two beta chains. It depends on pyridoxal 5'-phosphate as a cofactor.

The enzyme catalyses (1S,2R)-1-C-(indol-3-yl)glycerol 3-phosphate + L-serine = D-glyceraldehyde 3-phosphate + L-tryptophan + H2O. It functions in the pathway amino-acid biosynthesis; L-tryptophan biosynthesis; L-tryptophan from chorismate: step 5/5. Functionally, the beta subunit is responsible for the synthesis of L-tryptophan from indole and L-serine. This is Tryptophan synthase beta chain from Caldanaerobacter subterraneus subsp. tengcongensis (strain DSM 15242 / JCM 11007 / NBRC 100824 / MB4) (Thermoanaerobacter tengcongensis).